A 328-amino-acid chain; its full sequence is GTP 3',8-cyclase (328 aa).

A Radical SAM core domain is found at 1–229 (MNQVDYLRIS…DAQVRGSGPA (229 aa)). R8 is a GTP binding site. [4Fe-4S] cluster contacts are provided by C15 and C19. Y21 contacts S-adenosyl-L-methionine. [4Fe-4S] cluster is bound at residue C22. Position 60 (R60) interacts with GTP. G64 contacts S-adenosyl-L-methionine. A GTP-binding site is contributed by T91. S115 lines the S-adenosyl-L-methionine pocket. K155 contacts GTP. Residue M189 coordinates S-adenosyl-L-methionine. [4Fe-4S] cluster is bound by residues C252 and C255. 257 to 259 (RMR) is a binding site for GTP. C269 is a binding site for [4Fe-4S] cluster.

It belongs to the radical SAM superfamily. MoaA family. As to quaternary structure, monomer and homodimer. [4Fe-4S] cluster serves as cofactor.

The enzyme catalyses GTP + AH2 + S-adenosyl-L-methionine = (8S)-3',8-cyclo-7,8-dihydroguanosine 5'-triphosphate + 5'-deoxyadenosine + L-methionine + A + H(+). It functions in the pathway cofactor biosynthesis; molybdopterin biosynthesis. Its function is as follows. Catalyzes the cyclization of GTP to (8S)-3',8-cyclo-7,8-dihydroguanosine 5'-triphosphate. This chain is GTP 3',8-cyclase, found in Trichormus variabilis (strain ATCC 29413 / PCC 7937) (Anabaena variabilis).